A 531-amino-acid polypeptide reads, in one-letter code: Tryptophan 6-halogenase ThaL (531 aa).

FAD is bound by residues Gly-13, Thr-15, Ala-16, Ala-39, Ile-42, Ile-45, Val-47, and Ala-50. Lys-79 is a catalytic residue. Position 111 (Pro-111) interacts with L-tryptophan. Met-198 and Leu-349 together coordinate FAD. Positions 360 and 361 each coordinate chloride. An FAD-binding site is contributed by Ile-362. 4 residues coordinate L-tryptophan: Tyr-454, Tyr-455, Glu-461, and Phe-465.

It belongs to the flavin-dependent halogenase family. Bacterial tryptophan halogenase subfamily. Homodimer. Monomer in solution.

It carries out the reaction L-tryptophan + FADH2 + chloride + O2 = 6-chloro-L-tryptophan + FAD + 2 H2O. It catalyses the reaction D-tryptophan + FADH2 + chloride + O2 = 6-chloro-D-tryptophan + FAD + 2 H2O. In terms of biological role, involved in the biosynthesis of thienodolin, a plant growth-regulating compound. Catalyzes the chlorination of tryptophan (Trp) at C6 position to yield 6-chloro-tryptophan. It is also able to use bromide ions to generate monobrominated Trp. In vitro, accepts a wide range of amides and peptides carrying either L- or D-Trp at the N-terminus. This chain is Tryptophan 6-halogenase ThaL, found in Streptomyces albogriseolus.